A 47-amino-acid chain; its full sequence is Sperm protamine P1 (47 aa).

It belongs to the protamine P1 family. In terms of tissue distribution, testis.

It is found in the nucleus. Its subcellular location is the chromosome. Its function is as follows. Protamines substitute for histones in the chromatin of sperm during the haploid phase of spermatogenesis. They compact sperm DNA into a highly condensed, stable and inactive complex. The polypeptide is Sperm protamine P1 (PRM1) (Galeopterus variegatus (Malayan flying lemur)).